The primary structure comprises 891 residues: Alanine--tRNA ligase (891 aa).

Zn(2+) is bound by residues His-564, His-568, Cys-677, and His-681.

It belongs to the class-II aminoacyl-tRNA synthetase family. Requires Zn(2+) as cofactor.

The protein localises to the cytoplasm. It catalyses the reaction tRNA(Ala) + L-alanine + ATP = L-alanyl-tRNA(Ala) + AMP + diphosphate. Catalyzes the attachment of alanine to tRNA(Ala) in a two-step reaction: alanine is first activated by ATP to form Ala-AMP and then transferred to the acceptor end of tRNA(Ala). Also edits incorrectly charged Ser-tRNA(Ala) and Gly-tRNA(Ala) via its editing domain. In Rhodopseudomonas palustris (strain HaA2), this protein is Alanine--tRNA ligase.